We begin with the raw amino-acid sequence, 146 residues long: Hemoglobin subunit delta (146 aa).

The Globin domain maps to 2-146; that stretch reads HLTGDEKSAV…VATALAHKYH (145 aa). A Phosphoserine modification is found at Ser-50. Heme b-binding residues include His-63 and His-92.

It belongs to the globin family. Heterotetramer of two delta chains and two alpha chains. Red blood cells.

The protein is Hemoglobin subunit delta (HBD) of Aotus trivirgatus (Three-striped night monkey).